The primary structure comprises 897 residues: Beta-galactosidase (897 aa).

Glu-459 functions as the Proton donor in the catalytic mechanism. The active-site Nucleophile is Glu-525.

This sequence belongs to the glycosyl hydrolase 2 family.

The catalysed reaction is Hydrolysis of terminal non-reducing beta-D-galactose residues in beta-D-galactosides.. This is Beta-galactosidase (cbgA) from Clostridium acetobutylicum.